Reading from the N-terminus, the 713-residue chain is MEGTPNVPQAHRYELTLAGRPLVLETGKYAKQASGSVLVRYADTVVLATAQASETPVEADFLPLTVEFEERHYAVGKIPGSFMRREGRPGEKAILSARMTDRPIRPLFPKGFRHEVQIIVTVLSADQKNPPDILGPIAASAALMLSDIPWEGPIAAVRVGLIGGSFVLNPTLQELEESQLDLVVAGSKEAILMVEAEAGEVDEETLVQALEFAHKEMQPILELQEAMARELAKPKMAWTPPESLPEEEKEALYRLALERGLSQVLQTASKGERSRALAEFAERLIAEALPKGEDGTPDEGKKPLYESAFDEVVRRELRRLVLEEGKRADGRGPKDLRPIWIEVDVLPRAHGSAVFTRGETQVLGTVTLGTGRDEQILDDLGIDETEKFLVHYNFPPFSTGEVRRLRGVSRREVGHGNLAKRALKAVMPKEEDFPYTIRVVGDVLESNGSSSMATVCAGCLALMDAGVPIRAPVAGVAMGLVWEENRAVILTDILGLEDALGDMDFKVAGTRKGVTALQMDNKVGGLPREVLKEALLQAREARLKILDLMETVLPAPRPELKPFAPRILSLKVPVEKIGLVIGPGGKNVRALEELGVEVDIEEDGTVRIYSSDLNAALEAKKRIEDLTREAKVGEIYEGTVTRITPFGAFISLFPGTEGLLHISQIAPGRVERVEDHLKVGDVIKVKVHRIDERGKIDLIRPELEGKIPPRRRK.

The Mg(2+) site is built by D498 and D504. A KH domain is found at 565-631 (PRILSLKVPV…RIEDLTREAK (67 aa)). Residues 633–701 (GEIYEGTVTR…ERGKIDLIRP (69 aa)) form the S1 motif domain.

Belongs to the polyribonucleotide nucleotidyltransferase family. The cofactor is Mg(2+).

It is found in the cytoplasm. It catalyses the reaction RNA(n+1) + phosphate = RNA(n) + a ribonucleoside 5'-diphosphate. Functionally, involved in mRNA degradation. Catalyzes the phosphorolysis of single-stranded polyribonucleotides processively in the 3'- to 5'-direction. This Thermus thermophilus protein is Polyribonucleotide nucleotidyltransferase.